We begin with the raw amino-acid sequence, 438 residues long: Serine hydroxymethyltransferase (438 aa).

Residues Leu-135 and 139 to 141 (GHL) each bind (6S)-5,6,7,8-tetrahydrofolate. An N6-(pyridoxal phosphate)lysine modification is found at Lys-244. The segment at 361–383 (GVPNDPLPPVKTSGIRVGSPAGT) is disordered.

Belongs to the SHMT family. Homodimer. It depends on pyridoxal 5'-phosphate as a cofactor.

The protein resides in the cytoplasm. It catalyses the reaction (6R)-5,10-methylene-5,6,7,8-tetrahydrofolate + glycine + H2O = (6S)-5,6,7,8-tetrahydrofolate + L-serine. Its pathway is one-carbon metabolism; tetrahydrofolate interconversion. It participates in amino-acid biosynthesis; glycine biosynthesis; glycine from L-serine: step 1/1. Functionally, catalyzes the reversible interconversion of serine and glycine with tetrahydrofolate (THF) serving as the one-carbon carrier. This reaction serves as the major source of one-carbon groups required for the biosynthesis of purines, thymidylate, methionine, and other important biomolecules. Also exhibits THF-independent aldolase activity toward beta-hydroxyamino acids, producing glycine and aldehydes, via a retro-aldol mechanism. This Rhizorhabdus wittichii (strain DSM 6014 / CCUG 31198 / JCM 15750 / NBRC 105917 / EY 4224 / RW1) (Sphingomonas wittichii) protein is Serine hydroxymethyltransferase.